Reading from the N-terminus, the 463-residue chain is Cysteine--tRNA ligase (463 aa).

Cysteine 27 provides a ligand contact to Zn(2+). The 'HIGH' region signature appears at 29–39 (PTVYGLIHIGN). Zn(2+) contacts are provided by cysteine 207, histidine 232, and glutamate 236. The 'KMSKS' region signature appears at 264–268 (KMSKS). Residue lysine 267 participates in ATP binding.

Belongs to the class-I aminoacyl-tRNA synthetase family. As to quaternary structure, monomer. It depends on Zn(2+) as a cofactor.

The protein localises to the cytoplasm. It catalyses the reaction tRNA(Cys) + L-cysteine + ATP = L-cysteinyl-tRNA(Cys) + AMP + diphosphate. This is Cysteine--tRNA ligase from Pseudothermotoga lettingae (strain ATCC BAA-301 / DSM 14385 / NBRC 107922 / TMO) (Thermotoga lettingae).